We begin with the raw amino-acid sequence, 2358 residues long: Cell wall alpha-1,3-glucan synthase mok13 (2358 aa).

Basic and acidic residues predominate over residues 1645-1659 (EGLENEENELKDKAP). The segment at 1645–1669 (EGLENEENELKDKAPPNEPNVGSLF) is disordered.

Belongs to the glycosyltransferase group 1 family.

It catalyses the reaction [(1-&gt;3)-alpha-D-glucosyl](n) + UDP-alpha-D-glucose = [(1-&gt;3)-alpha-D-glucosyl](n+1) + UDP + H(+). This chain is Cell wall alpha-1,3-glucan synthase mok13 (mok13), found in Schizosaccharomyces pombe (strain 972 / ATCC 24843) (Fission yeast).